Here is a 74-residue protein sequence, read N- to C-terminus: Kappa-stichotoxin-Sgt4a (74 aa).

Residues 1-22 (MKFQVIAAVLLIEFCLCVVVTA) form the signal peptide. Residues 23–39 (RMELQDVEDVENGFQKR) constitute a propeptide that is removed on maturation. One can recognise a ShKT domain in the interval 42–74 (CIDTIPQSRCTAFQCKHSMKYRLSFCRKTCGTC). Disulfide bonds link Cys42–Cys74, Cys51–Cys67, and Cys56–Cys71.

The protein belongs to the sea anemone type 1 potassium channel toxin family. Type 1a subfamily.

The protein localises to the secreted. It is found in the nematocyst. In terms of biological role, inhibits voltage-gated potassium channels (Kv) with higher potency for Kv1.1/KCNA1 and Kv1.3/KCNA3. The sequence is that of Kappa-stichotoxin-Sgt4a from Stichodactyla gigantea (Giant carpet anemone).